The sequence spans 663 residues: Translation factor GUF1, mitochondrial (663 aa).

The transit peptide at 1–44 (MRGCLQSVRWLTTALRRPAPQLSCLPFQPFASTSRLFSSCASRA) directs the protein to the mitochondrion. Positions 65–245 (ERFRNFCIVA…TIVEQIPAPV (181 aa)) constitute a tr-type G domain. GTP is bound by residues 74–81 (AHVDHGKS), 138–142 (DTPGH), and 192–195 (NKVD).

It belongs to the TRAFAC class translation factor GTPase superfamily. Classic translation factor GTPase family. LepA subfamily.

It localises to the mitochondrion inner membrane. The catalysed reaction is GTP + H2O = GDP + phosphate + H(+). Its function is as follows. Promotes mitochondrial protein synthesis. May act as a fidelity factor of the translation reaction, by catalyzing a one-codon backward translocation of tRNAs on improperly translocated ribosomes. Binds to mitochondrial ribosomes in a GTP-dependent manner. In Coccidioides posadasii (strain C735) (Valley fever fungus), this protein is Translation factor GUF1, mitochondrial.